The sequence spans 106 residues: RxLR effector protein PSR1 (106 aa).

The signal sequence occupies residues 1–20 (MRLTYVLLVAVTTLLVSCDA). The RxLR-dEER motif lies at 33 to 46 (RLLRFVEAADEEER). A WY domain region spans residues 50-106 (FSPEKLRKMLGDETYRLKKFGKWDSDGHTFDGLKHYLLLSDSSMVKLRNMYKAWLEQ). Residues 56-69 (RKMLGDETYRLKKF) carry the Bipartite nuclear localization signal (NLS) motif.

This sequence belongs to the RxLR effector family. As to quaternary structure, interacts with host PINP1.

It localises to the secreted. The protein resides in the host nucleus. Its function is as follows. Secreted effector that possesses RNA silencing suppression activity by inhibiting the biogenesis of small RNAs in the host plant to promote enhanced susceptibility of host to the pathogen during infection. Interferes with secondary siRNA production by associating with host nuclear protein PINP1 that acts as a regulator of the accumulation of both microRNAs and endogenous small interfering RNAs. This is RxLR effector protein PSR1 from Phytophthora sojae (Soybean stem and root rot agent).